We begin with the raw amino-acid sequence, 344 residues long: Biotin synthase (344 aa).

A Radical SAM core domain is found at asparagine 36 to serine 260. Residues cysteine 51, cysteine 55, and cysteine 58 each contribute to the [4Fe-4S] cluster site. Cysteine 95, cysteine 126, cysteine 186, and arginine 258 together coordinate [2Fe-2S] cluster.

Belongs to the radical SAM superfamily. Biotin synthase family. As to quaternary structure, homodimer. [4Fe-4S] cluster serves as cofactor. The cofactor is [2Fe-2S] cluster.

The catalysed reaction is (4R,5S)-dethiobiotin + (sulfur carrier)-SH + 2 reduced [2Fe-2S]-[ferredoxin] + 2 S-adenosyl-L-methionine = (sulfur carrier)-H + biotin + 2 5'-deoxyadenosine + 2 L-methionine + 2 oxidized [2Fe-2S]-[ferredoxin]. It participates in cofactor biosynthesis; biotin biosynthesis; biotin from 7,8-diaminononanoate: step 2/2. Catalyzes the conversion of dethiobiotin (DTB) to biotin by the insertion of a sulfur atom into dethiobiotin via a radical-based mechanism. This Buchnera aphidicola subsp. Baizongia pistaciae (strain Bp) protein is Biotin synthase.